Here is a 330-residue protein sequence, read N- to C-terminus: Beta-ketoacyl-[acyl-carrier-protein] synthase III (330 aa).

Catalysis depends on residues cysteine 114 and histidine 255. The segment at 256–260 is ACP-binding; the sequence is QANQR. Asparagine 285 is a catalytic residue.

It belongs to the thiolase-like superfamily. FabH family. As to quaternary structure, homodimer.

Its subcellular location is the cytoplasm. The catalysed reaction is malonyl-[ACP] + acetyl-CoA + H(+) = 3-oxobutanoyl-[ACP] + CO2 + CoA. Its pathway is lipid metabolism; fatty acid biosynthesis. Its function is as follows. Catalyzes the condensation reaction of fatty acid synthesis by the addition to an acyl acceptor of two carbons from malonyl-ACP. Catalyzes the first condensation reaction which initiates fatty acid synthesis and may therefore play a role in governing the total rate of fatty acid production. Possesses both acetoacetyl-ACP synthase and acetyl transacylase activities. Its substrate specificity determines the biosynthesis of branched-chain and/or straight-chain of fatty acids. The chain is Beta-ketoacyl-[acyl-carrier-protein] synthase III from Nostoc sp. (strain PCC 7120 / SAG 25.82 / UTEX 2576).